A 155-amino-acid chain; its full sequence is Ribosome maturation factor RimP (155 aa).

This sequence belongs to the RimP family.

The protein localises to the cytoplasm. In terms of biological role, required for maturation of 30S ribosomal subunits. This chain is Ribosome maturation factor RimP, found in Synechococcus sp. (strain CC9902).